A 365-amino-acid chain; its full sequence is Magnesium-chelatase subunit ChlI homolog (365 aa).

40–47 contacts ATP; it reads EKGTAKST. The disordered stretch occupies residues 340-365; it reads FKQQNNKDNEEKEEHKDDDVKKNMMK. Positions 344–365 are enriched in basic and acidic residues; the sequence is NNKDNEEKEEHKDDDVKKNMMK.

It belongs to the Mg-chelatase subunits D/I family.

In Methanocaldococcus jannaschii (strain ATCC 43067 / DSM 2661 / JAL-1 / JCM 10045 / NBRC 100440) (Methanococcus jannaschii), this protein is Magnesium-chelatase subunit ChlI homolog.